The primary structure comprises 163 residues: Gas vesicle protein H2 (163 aa).

Residues 57 to 92 (LGSDARSPSTPAGNADDAGDAETAHIETRASDDSDD) are disordered. The segment covering 78–88 (ETAHIETRASD) has biased composition (basic and acidic residues).

It belongs to the gas vesicle GvpH family. In terms of assembly, gvpF to GvpM interact with each other in vitro, and may form multi-subunit complex(es). Interacts with GvpC. Might interact with GvpA.

The protein localises to the gas vesicle. It is found in the cytoplasm. Functionally, a minor component of the gas vesicle, also found in soluble extracts. Proteins GvpF to GvpM might be involved in nucleating gas vesicle formation. Gas vesicles are hollow, gas filled proteinaceous nanostructures found in several microbial planktonic microorganisms. They allow positioning of halobacteria at the optimal depth for growth in the poorly aerated, shallow brine pools of their habitat. Its function is as follows. Expression of 2 c-vac DNA fragments containing 2 divergently transcribed regions (gvpE-gvpF-gvpG-gvpH-gvpI-gvpJ-gvpK-gvpL-gvpM and gvpA-gvpC-gvpN-gvpO) allows H.volcanii to produce gas vesicles. The protein is Gas vesicle protein H2 of Halobacterium salinarum (strain ATCC 700922 / JCM 11081 / NRC-1) (Halobacterium halobium).